The following is a 595-amino-acid chain: Inactive serine/threonine-protein kinase PLK5 (595 aa).

The Protein kinase domain occupies 27–279 (YRRGKLIGKG…LDHLLQDDFF (253 aa)). ATP is bound by residues 33 to 41 (IGKGAFSRC) and Lys56. Asp150 acts as the Proton acceptor in catalysis. The segment at 326 to 350 (FTSKEASGPGEEGTEPDHMEAGNEE) is disordered. Over residues 340 to 350 (EPDHMEAGNEE) the composition is skewed to basic and acidic residues. POLO box domains are found at residues 413-491 (WAPK…YMQR) and 509-595 (DISL…LQSV).

It belongs to the protein kinase superfamily. Ser/Thr protein kinase family. CDC5/Polo subfamily. In terms of tissue distribution, expressed in the cerebellum, eye and brain cortex (at protein level). Expressed in highly differentiated tissues, such as brain, eyes and ovary. Not detectable in proliferating tissues, such as the colon, spleen and placenta.

It is found in the nucleus. The protein resides in the nucleolus. The protein localises to the cytoplasm. Its function is as follows. Inactive serine/threonine-protein kinase that plays a role in cell cycle progression and neuronal differentiation. The polypeptide is Inactive serine/threonine-protein kinase PLK5 (Mus musculus (Mouse)).